A 235-amino-acid polypeptide reads, in one-letter code: 2-C-methyl-D-erythritol 4-phosphate cytidylyltransferase (235 aa).

It belongs to the IspD/TarI cytidylyltransferase family. IspD subfamily.

It catalyses the reaction 2-C-methyl-D-erythritol 4-phosphate + CTP + H(+) = 4-CDP-2-C-methyl-D-erythritol + diphosphate. It functions in the pathway isoprenoid biosynthesis; isopentenyl diphosphate biosynthesis via DXP pathway; isopentenyl diphosphate from 1-deoxy-D-xylulose 5-phosphate: step 2/6. In terms of biological role, catalyzes the formation of 4-diphosphocytidyl-2-C-methyl-D-erythritol from CTP and 2-C-methyl-D-erythritol 4-phosphate (MEP). This chain is 2-C-methyl-D-erythritol 4-phosphate cytidylyltransferase, found in Pseudomonas fluorescens (strain SBW25).